The sequence spans 374 residues: MHKTRLALSCLLGSLLLSGAVHAAEALVPPKGYYAPVDIRKGEAPACPVVPEPFTGELVFRSKYEGSDAARSTLNEEAEKAFRTKTAPITQIERGVSRMVMRYMEKGRAGDLECTLAWLDAWAEDGALLTTEYNHTGKSMRKWALGSLAGAYLRLKFSSSQPLAAYPEQARRIESWFAKVGDQVIKDWSDLPLKRINNHSYWAAWAVMAAGVATNRRPLFDWAVEQFHIAAGQVDSNGFLPNELKRRQRALAYHNYSLPPLMMVAAFALANGVDLRGDNDGALGRLAGNVLAGVEKPEPFAERAGDEDQDMEDLETDAKFSWLEPYCALYSCSPALRERKAEMGPFKNFRLGGDVTRIFDPAEKSPRSTVGKRD.

Residues 1 to 23 (MHKTRLALSCLLGSLLLSGAVHA) form the signal peptide. Substrate-binding positions include 62 to 63 (SK), 135 to 136 (HT), and Tyr253.

Belongs to the polysaccharide lyase 5 family.

The protein localises to the periplasm. The catalysed reaction is Eliminative cleavage of alginate to give oligosaccharides with 4-deoxy-alpha-L-erythro-hex-4-enuronosyl groups at their non-reducing ends and beta-D-mannuronate at their reducing end.. Catalyzes the depolymerization of alginate by cleaving the beta-1,4 glycosidic bond between two adjacent sugar residues via a beta-elimination mechanism. May serve to degrade mislocalized alginate that is trapped in the periplasmic space. The polypeptide is Alginate lyase (Azotobacter vinelandii (strain DJ / ATCC BAA-1303)).